Here is a 428-residue protein sequence, read N- to C-terminus: CRISPR system endoribonuclease Csm6 (428 aa).

The tract at residues 1 to 145 (MKILISAVGT…RANREYTALT (145 aa)) is CARF domain. Residues 146-428 (ESEIDALIME…QNKELIKMLE (283 aa)) form an HEPN domain region.

It belongs to the CRISPR-associated Csm6 family. Homodimer. The composite ssRNase active site is formed at the dimer interface.

Non-specific ssRNase activity is allosterically activated about 1000-fold by cyclic hexaadenylate (cA6), a second messenger produced by Cas10 of the ternary Csm effector complex in the presence of a cognate target RNA. ssRNase activity is inhibited by physiological concentrations of ATP (1 mM), activity is restored by cOA. Its function is as follows. CRISPR (clustered regularly interspaced short palindromic repeat) is an adaptive immune system that provides protection against mobile genetic elements (viruses, transposable elements and conjugative plasmids). CRISPR clusters contain spacers, sequences complementary to antecedent mobile elements, and target invading nucleic acids. CRISPR clusters are transcribed and processed into CRISPR RNA (crRNA). The type III-A Csm complex binds crRNA and acts as a crRNA-guided RNase, DNase and cyclic oligoadenylate synthase; binding of target RNA cognate to the crRNA is required for all activities. In a heterologous host this Csm effector complex restricts ssRNA phage MS2, suggesting it may target RNA viruses in vivo. This protein is not part of the Csm complex. Functionally, csm functions as a non-specific ssDNase. Base-pairing between crRNA and target RNA to form a ternary Csm complex activates a ssDNase activity; target RNA cleavage suppresses the ssDNase, a temporal control that prevents uncontrolled DNA degradation. Viral RNA transcripts probably tether the Csm complex to the viral genome, recruiting Cas10 ssDNA activity which is able to degrade DNA in the transcription bubble, spatially controlling the DNase activity. In terms of biological role, a single-strand-specific endoribonuclease (ssRNase) that is approximately 1000-fold stimulated by cyclic oligoadenylate (cOA); although several species of cOA are synthesized by this organism only cyclic hexaadenylate (cA6) stimulates the ssRNase activity. Cleaves preferentially within GA or AA dinucleotides, although the presence of cA6 broadens the preference. Linear oligoadenylates do not activate the RNase. This Streptococcus thermophilus protein is CRISPR system endoribonuclease Csm6.